Reading from the N-terminus, the 710-residue chain is mRNA export factor crp79 (710 aa).

RRM domains follow at residues Ile19 to Ile102 and His222 to Pro292. The span at Gln333–His348 shows a compositional bias: polar residues. The tract at residues Gln333–Lys357 is disordered. Positions Glu401–Phe474 constitute an RRM 3 domain. Polar residues predominate over residues Thr502–Lys524. The disordered stretch occupies residues Thr502–Glu544. The segment covering Val525–Glu538 has biased composition (basic and acidic residues).

Its subcellular location is the cytoplasm. It is found in the nucleus. Functionally, binds the poly(A) tail of mRNA. Involved in the export of mRNA from the nucleus to the cytoplasm. The protein is mRNA export factor crp79 (crp79) of Schizosaccharomyces pombe (strain 972 / ATCC 24843) (Fission yeast).